The primary structure comprises 62 residues: Photosystem II reaction center protein Z (62 aa).

Transmembrane regions (helical) follow at residues 8-28 (AVFALIATSSILLISVPVVFA) and 41-61 (FSGTSLWIALVFLVGILNSLI).

This sequence belongs to the PsbZ family. In terms of assembly, PSII is composed of 1 copy each of membrane proteins PsbA, PsbB, PsbC, PsbD, PsbE, PsbF, PsbH, PsbI, PsbJ, PsbK, PsbL, PsbM, PsbT, PsbY, PsbZ, Psb30/Ycf12, at least 3 peripheral proteins of the oxygen-evolving complex and a large number of cofactors. It forms dimeric complexes.

The protein localises to the plastid. It localises to the chloroplast thylakoid membrane. Functionally, may control the interaction of photosystem II (PSII) cores with the light-harvesting antenna, regulates electron flow through the 2 photosystem reaction centers. PSII is a light-driven water plastoquinone oxidoreductase, using light energy to abstract electrons from H(2)O, generating a proton gradient subsequently used for ATP formation. The polypeptide is Photosystem II reaction center protein Z (Lotus japonicus (Lotus corniculatus var. japonicus)).